Here is a 157-residue protein sequence, read N- to C-terminus: Protein Smg homolog (157 aa).

The protein belongs to the Smg family.

This is Protein Smg homolog from Shewanella halifaxensis (strain HAW-EB4).